Here is a 465-residue protein sequence, read N- to C-terminus: ATP synthase subunit beta (465 aa).

152-159 is a binding site for ATP; it reads GGAGVGKT.

It belongs to the ATPase alpha/beta chains family. F-type ATPases have 2 components, CF(1) - the catalytic core - and CF(0) - the membrane proton channel. CF(1) has five subunits: alpha(3), beta(3), gamma(1), delta(1), epsilon(1). CF(0) has three main subunits: a(1), b(2) and c(9-12). The alpha and beta chains form an alternating ring which encloses part of the gamma chain. CF(1) is attached to CF(0) by a central stalk formed by the gamma and epsilon chains, while a peripheral stalk is formed by the delta and b chains.

The protein resides in the cell inner membrane. It carries out the reaction ATP + H2O + 4 H(+)(in) = ADP + phosphate + 5 H(+)(out). In terms of biological role, produces ATP from ADP in the presence of a proton gradient across the membrane. The catalytic sites are hosted primarily by the beta subunits. In Campylobacter concisus (strain 13826), this protein is ATP synthase subunit beta.